The primary structure comprises 322 residues: Putative integrase ORF3 (322 aa).

The Integrase catalytic domain maps to 153 to 322 (RGKLTDFKSI…SSKEMFLQNI (170 aa)).

Belongs to the plectrovirus integrase ORF3 family.

This protein may encode an integrase, which is necessary for integration of the viral DNA into host genome. The sequence is that of Putative integrase ORF3 from Spiroplasma virus SpV1-R8A2 B (SpV1).